The sequence spans 385 residues: Mitochondrial protein C2orf69 (385 aa).

A mitochondrion-targeting transit peptide spans 1 to 24 (MWGFRLLRSPPLLLLLPQLGIGNA).

This sequence belongs to the C2orf69 family.

The protein localises to the mitochondrion matrix. Its function is as follows. May play a role in the respiratory chain. This chain is Mitochondrial protein C2orf69 (C2orf69), found in Homo sapiens (Human).